Reading from the N-terminus, the 223-residue chain is MRLVIAQCTVDYVGRLTAHLPSARRLLLIKSDGSVSVHADDRAYKPLNWMSPPCRLSEESGDPHPVWVVENKTGEQLRITVEEIEHDSSHDLGVDPGLVKDGVEAHLQKLLAEHVELLGAGYTLVRREYMTAIGPVDLLCRDETGRSVAVEIKRRGEIDGVEQLTRYLELLNRDTLLAPVSGVFAAQQIKPQARTLANDRGIRCLILDYDQMRGMDSDEYRLF.

It belongs to the NucS endonuclease family.

Its subcellular location is the cytoplasm. Functionally, cleaves both 3' and 5' ssDNA extremities of branched DNA structures. The sequence is that of Endonuclease NucS from Mycobacterium sp. (strain JLS).